Consider the following 421-residue polypeptide: Succinate--CoA ligase [ADP-forming] subunit beta, mitochondrial (421 aa).

The N-terminal 26 residues, 1–26 (MRGLVNKLVSRSLSISGKWQNQQLRR), are a transit peptide targeting the mitochondrion. Residues 35 to 278 (AELMGKYGVN…PTQEDPREVA (244 aa)) enclose the ATP-grasp domain. ATP-binding positions include K74, 81–83 (GRG), and E141. N233 and D247 together coordinate Mg(2+). Residues N298 and 355 to 357 (GIM) contribute to the substrate site.

The protein belongs to the succinate/malate CoA ligase beta subunit family. In terms of assembly, heterodimer of an alpha and a beta subunit. The cofactor is Mg(2+).

It is found in the mitochondrion. The catalysed reaction is succinate + ATP + CoA = succinyl-CoA + ADP + phosphate. It participates in carbohydrate metabolism; tricarboxylic acid cycle; succinate from succinyl-CoA (ligase route): step 1/1. Its function is as follows. Succinyl-CoA synthetase functions in the citric acid cycle (TCA), coupling the hydrolysis of succinyl-CoA to the synthesis of ATP and thus represents the only step of substrate-level phosphorylation in the TCA. The beta subunit provides nucleotide specificity of the enzyme and binds the substrate succinate, while the binding sites for coenzyme A and phosphate are found in the alpha subunit. In Arabidopsis thaliana (Mouse-ear cress), this protein is Succinate--CoA ligase [ADP-forming] subunit beta, mitochondrial.